A 712-amino-acid chain; its full sequence is Probable metal-nicotianamine transporter YSL11 (712 aa).

Residues 25 to 48 (RRNTTAAARGNAGEEEEEAEAVAP) form a disordered region. The next 14 helical transmembrane spans lie at 70-90 (AFVV…KLSL), 93-113 (GVIP…VRLW), 138-158 (CVVS…LFGM), 180-200 (LGWI…ALVP), 242-262 (LGKY…YTAG), 300-320 (IVNV…WPLI), 345-365 (VFIT…KVFG), 418-438 (VAIG…PLII), 446-466 (ILIA…GSGL), 478-498 (LAIF…LVGL), 532-552 (FVSQ…VFWL), 593-613 (LTLC…KDLV), 631-651 (FYLG…LYFW), and 666-686 (VASG…VLSL).

The protein belongs to the YSL (TC 2.A.67.2) family.

Its subcellular location is the membrane. Functionally, may be involved in the transport of nicotianamine-chelated metals. In Oryza sativa subsp. japonica (Rice), this protein is Probable metal-nicotianamine transporter YSL11 (YSL11).